The sequence spans 278 residues: Putative protein-disulfide oxidoreductase RF_0032 (278 aa).

The signal sequence occupies residues 1–18 (MRSIFIVPIFLLFLSSCS). The disordered stretch occupies residues 62–84 (VPANDNNQTDEVSTPPSQEQKNP). Positions 65-81 (NDNNQTDEVSTPPSQEQ) are enriched in polar residues. In terms of domain architecture, Thioredoxin spans 77-266 (PSQEQKNPEI…ISTAVDKALE (190 aa)). Cysteines 119 and 122 form a disulfide.

This sequence belongs to the thioredoxin family. DsbA subfamily.

The protein localises to the periplasm. Its function is as follows. May be required for disulfide bond formation in some proteins. The protein is Putative protein-disulfide oxidoreductase RF_0032 of Rickettsia felis (strain ATCC VR-1525 / URRWXCal2) (Rickettsia azadi).